The sequence spans 87 residues: MKTKLNELLEFPCSFTYKVMGIAEPQLVDQVVEVVQRHAPGEYTPQVKPSSKGNYHSVSITITATHIDQVETLYEELGNLELVKMVL.

The protein belongs to the UPF0250 family.

This is UPF0250 protein YPK_3025 from Yersinia pseudotuberculosis serotype O:3 (strain YPIII).